We begin with the raw amino-acid sequence, 443 residues long: MDRLGSFSNDPSDKPPCRGCSSYLTEPYIKCAECGPPPFFLCLQCFTRGFEYKKHQSDHTYEIMTSDFPVLDPSWTAQEEMALLEAVMDCGFGNWQDVANQMCTKTKEECEKHYMKHFINNPLFASTLLNLKQAEAAKAADTAIPFHSADDPPRPAFDSLLSRDMAGYMPARADFIEEFDNYAEWDLRDIDFVEDDSDILHALKMAVVDIYHSRLKERQRRKKIIRDHGLVNLRKFRLMERRYPKEVQDLYETMRRFARIVGPVEHDKFIESHALEFELRREIKRLQEYRTAGITNFCSARTYDHLKKTREEERLKRTMLSEVLQYIQDSSACQQWLRRQADIDSGLSPSVLMASNSGRRSAPPLNLTGLPGTEKLNEKEKELCQVVRLVPGAYLEYKSALLNECHKQGGLRLAQARALIKIDVNKTRKIYDFLIREGYITKA.

S6 bears the Phosphoserine mark. The segment at 12-69 adopts a ZZ-type zinc-finger fold; the sequence is SDKPPCRGCSSYLTEPYIKCAECGPPPFFLCLQCFTRGFEYKKHQSDHTYEIMTSDFP. C17, C20, C31, C34, C42, C45, H55, and H59 together coordinate Zn(2+). The SANT domain occupies 70 to 122; the sequence is VLDPSWTAQEEMALLEAVMDCGFGNWQDVANQMCTKTKEECEKHYMKHFINNP. Residues K132 and K138 each participate in a glycyl lysine isopeptide (Lys-Gly) (interchain with G-Cter in SUMO2) cross-link. The region spanning 356–443 is the SWIRM domain; it reads NSGRRSAPPL…LIREGYITKA (88 aa). Residues 426 to 435 mediate DNA binding; that stretch reads KTRKIYDFLI.

As to quaternary structure, interacts with GCN5. Interacts with NR3C1. Associated with the P/CAF protein in the PCAF complex. Component of the PCAF complex, at least composed of TADA2L/ADA2, TADA3L/ADA3, TAF5L/PAF65-beta, TAF6L/PAF65-alpha, TAF10/TAFII30, TAF12/TAFII20, TAF9/TAFII31 and TRRAP. Component of the ADA2A-containing complex (ATAC), composed of KAT14, KAT2A, TADA2L, TADA3L, ZZ3, MBIP, WDR5, YEATS2, CCDC101 and DR1. Interacts with CCDC134.

The protein localises to the nucleus. The protein resides in the chromosome. Its function is as follows. Component of the ATAC complex, a complex with histone acetyltransferase activity on histones H3 and H4. Required for the function of some acidic activation domains, which activate transcription from a distant site. Binds double-stranded DNA. Binds dinucleosomes, probably at the linker region between neighboring nucleosomes. Plays a role in chromatin remodeling. May promote TP53/p53 'Lys-321' acetylation, leading to reduced TP53 stability and transcriptional activity. May also promote XRCC6 acetylation thus facilitating cell apoptosis in response to DNA damage. This is Transcriptional adapter 2-alpha (Tada2a) from Mus musculus (Mouse).